Here is a 407-residue protein sequence, read N- to C-terminus: Probable tRNA sulfurtransferase (407 aa).

One can recognise a THUMP domain in the interval 61–165 (NEITYRLSKI…LDAIYMYEEV (105 aa)). Residues 183 to 184 (ML), 208 to 209 (HF), Arg265, Gly287, and Gln296 contribute to the ATP site.

It belongs to the ThiI family.

The protein localises to the cytoplasm. The catalysed reaction is [ThiI sulfur-carrier protein]-S-sulfanyl-L-cysteine + a uridine in tRNA + 2 reduced [2Fe-2S]-[ferredoxin] + ATP + H(+) = [ThiI sulfur-carrier protein]-L-cysteine + a 4-thiouridine in tRNA + 2 oxidized [2Fe-2S]-[ferredoxin] + AMP + diphosphate. It catalyses the reaction [ThiS sulfur-carrier protein]-C-terminal Gly-Gly-AMP + S-sulfanyl-L-cysteinyl-[cysteine desulfurase] + AH2 = [ThiS sulfur-carrier protein]-C-terminal-Gly-aminoethanethioate + L-cysteinyl-[cysteine desulfurase] + A + AMP + 2 H(+). Its pathway is cofactor biosynthesis; thiamine diphosphate biosynthesis. Catalyzes the ATP-dependent transfer of a sulfur to tRNA to produce 4-thiouridine in position 8 of tRNAs, which functions as a near-UV photosensor. Also catalyzes the transfer of sulfur to the sulfur carrier protein ThiS, forming ThiS-thiocarboxylate. This is a step in the synthesis of thiazole, in the thiamine biosynthesis pathway. The sulfur is donated as persulfide by IscS. The polypeptide is Probable tRNA sulfurtransferase (Staphylococcus aureus (strain N315)).